Here is a 319-residue protein sequence, read N- to C-terminus: MPSQLEALRRHTTVVADTGDFETMRALRPTDATTNPSLILKAVQQAAYRPLLDQVARDHRGAPLAEITDRLLVAFGRQILDIVPGRVSTEVDARLSFDTRATIERARSLIALYEAAGVARERVLIKIASTWEGIQAARLLQQEGIRCNLTLLFSLVQAAACAEAGVQLISPFVGRIYDWHKKAAGAQWNEAQQSGVNDPGVQSVARIFAYYKAYGVATEVMGASFRNTGQILALAGCDLLTISPELLARLDATEGEVPLSLSEPLPGAALPKALPSGEIAFRSLLNEDAMASEKLAEGIRLFVGDAQRLDDLLRAAGAY.

Lys-126 (schiff-base intermediate with substrate) is an active-site residue.

Belongs to the transaldolase family. Type 1 subfamily. As to quaternary structure, homodimer.

It localises to the cytoplasm. It catalyses the reaction D-sedoheptulose 7-phosphate + D-glyceraldehyde 3-phosphate = D-erythrose 4-phosphate + beta-D-fructose 6-phosphate. The protein operates within carbohydrate degradation; pentose phosphate pathway; D-glyceraldehyde 3-phosphate and beta-D-fructose 6-phosphate from D-ribose 5-phosphate and D-xylulose 5-phosphate (non-oxidative stage): step 2/3. In terms of biological role, transaldolase is important for the balance of metabolites in the pentose-phosphate pathway. The sequence is that of Transaldolase from Bordetella avium (strain 197N).